The following is a 372-amino-acid chain: MVNVVLAGGGTAGHTSPLIATAMALQERGATVSCIGTPRGLEGRVIPEAGLQLDMIPPVPLPRTVNADLFKVPARLAGAVRKAGEVLQRRQTDVVVGFGGYVSLPAYLAARRAKIPVVIHEQNAVPGLANKIAARFAVFVGTAFPDTPLPKARFVGMPLRSQITDLADASGQARAERCARARADLGLDINRPTLLVSGGSQGAVAINEAVVAARTRLLADGVQILHVLGPKNIRGATRITDELTGASWLPMGYVDDMASAYAAADLMVARSGAGTVVETATVGLPTIYVPLPHGNGEQARNATSAVDAGAGVVVANADLDVERLLAETARIHDADVLAQMSAAGRGLMPAHAAEEMAVRVISAATSIDPTIG.

UDP-N-acetyl-alpha-D-glucosamine contacts are provided by residues 11-13 (TAG), Asn123, Arg160, Ser200, and Gln298.

The protein belongs to the glycosyltransferase 28 family. MurG subfamily.

Its subcellular location is the cell membrane. It carries out the reaction di-trans,octa-cis-undecaprenyl diphospho-N-acetyl-alpha-D-muramoyl-L-alanyl-D-glutamyl-meso-2,6-diaminopimeloyl-D-alanyl-D-alanine + UDP-N-acetyl-alpha-D-glucosamine = di-trans,octa-cis-undecaprenyl diphospho-[N-acetyl-alpha-D-glucosaminyl-(1-&gt;4)]-N-acetyl-alpha-D-muramoyl-L-alanyl-D-glutamyl-meso-2,6-diaminopimeloyl-D-alanyl-D-alanine + UDP + H(+). It functions in the pathway cell wall biogenesis; peptidoglycan biosynthesis. Functionally, cell wall formation. Catalyzes the transfer of a GlcNAc subunit on undecaprenyl-pyrophosphoryl-MurNAc-pentapeptide (lipid intermediate I) to form undecaprenyl-pyrophosphoryl-MurNAc-(pentapeptide)GlcNAc (lipid intermediate II). In Cutibacterium acnes (strain DSM 16379 / KPA171202) (Propionibacterium acnes), this protein is UDP-N-acetylglucosamine--N-acetylmuramyl-(pentapeptide) pyrophosphoryl-undecaprenol N-acetylglucosamine transferase.